Reading from the N-terminus, the 160-residue chain is 3-hydroxyacyl-[acyl-carrier-protein] dehydratase FabZ (160 aa).

The active site involves His-63.

The protein belongs to the thioester dehydratase family. FabZ subfamily.

It is found in the cytoplasm. The enzyme catalyses a (3R)-hydroxyacyl-[ACP] = a (2E)-enoyl-[ACP] + H2O. Its function is as follows. Involved in unsaturated fatty acids biosynthesis. Catalyzes the dehydration of short chain beta-hydroxyacyl-ACPs and long chain saturated and unsaturated beta-hydroxyacyl-ACPs. This Xylella fastidiosa (strain 9a5c) protein is 3-hydroxyacyl-[acyl-carrier-protein] dehydratase FabZ.